We begin with the raw amino-acid sequence, 96 residues long: Large ribosomal subunit protein bL28 (96 aa).

Residues 1 to 22 (MSRRCELTGKGPMTGNNVSHAN) form a disordered region.

It belongs to the bacterial ribosomal protein bL28 family.

The chain is Large ribosomal subunit protein bL28 from Ruegeria sp. (strain TM1040) (Silicibacter sp.).